Consider the following 963-residue polypeptide: Iron-responsive element-binding protein 2 (963 aa).

Cys-512, Cys-578, and Cys-581 together coordinate [4Fe-4S] cluster.

The protein belongs to the aconitase/IPM isomerase family. In terms of assembly, interacts with RBCK1 only in iron-rich conditions. Interacts (when associated with the 4Fe-4S) with FBXL5. Interacts with CIAO1 and CIAO2A. Requires [4Fe-4S] cluster as cofactor. Post-translationally, ubiquitinated and degraded by the proteasome in presence of high level of iron and oxygen. Ubiquitinated by a SCF complex containing FBXL5. Upon iron and oxygen depletion FBXL5 is degraded, preventing ubiquitination and allowing its RNA-binding activity.

The protein localises to the cytoplasm. In terms of biological role, RNA-binding protein that binds to iron-responsive elements (IRES), which are stem-loop structures found in the 5'-UTR of ferritin, and delta aminolevulinic acid synthase mRNAs, and in the 3'-UTR of transferrin receptor mRNA. Binding to the IRE element in ferritin results in the repression of its mRNA translation. Binding of the protein to the transferrin receptor mRNA inhibits the degradation of this otherwise rapidly degraded mRNA. This is Iron-responsive element-binding protein 2 (Ireb2) from Mus musculus (Mouse).